A 313-amino-acid polypeptide reads, in one-letter code: Putative stilbene synthase 2 (313 aa).

The active site involves Cys88. Residues Leu191 and 229-231 contribute to the substrate site; that span reads GGP.

The protein belongs to the thiolase-like superfamily. Chalcone/stilbene synthases family. Homodimer.

The protein localises to the cytoplasm. The enzyme catalyses 4-coumaroyl-CoA + 3 malonyl-CoA + 3 H(+) = trans-resveratrol + 4 CO2 + 4 CoA. It participates in phytoalexin biosynthesis; 3,4',5-trihydroxystilbene biosynthesis; 3,4',5-trihydroxystilbene from trans-4-coumarate: step 2/2. This is Putative stilbene synthase 2 from Arachis hypogaea (Peanut).